A 2157-amino-acid chain; its full sequence is Unconventional myosin-IXb (2157 aa).

Ser-2 carries the N-acetylserine modification. The Ras-associating domain occupies 15–114 (AAYHLHIYPQ…YYFLLQERNA (100 aa)). The Myosin motor domain maps to 146–953 (ADFDDLCNLP…ERQALQETLH (808 aa)). 239 to 246 (GESGSGKT) is an ATP binding site. The segment at 709-734 (AEKAAGMSSPGAQSHPEELPRGASTP) is disordered. Ser-716 and Ser-717 each carry phosphoserine. Residues 844 to 855 (KAEPFFIRCIRS) form an actin-binding region. The interval 940 to 1044 (LKETERQALQ…CRGHLQRKSF (105 aa)) is neck or regulatory domain. IQ domains lie at 957–977 (VRKI…RHFL), 979–1000 (MKRA…RALE), 1001–1023 (RTQA…LYRH), and 1024–1053 (QKQS…EKQK). A Phosphoserine modification is found at Ser-1045. The interval 1045-2157 (SQMISEKQKA…LPPASGQTNG (1113 aa)) is tail. Residues 1046–1071 (QMISEKQKAEEKEREALEAARAGAEE) adopt a coiled-coil conformation. Disordered regions lie at residues 1046–1298 (QMIS…TQIQ), 1320–1410 (AAAS…GSQV), and 1455–1484 (GLEA…KKNR). Basic and acidic residues-rich tracts occupy residues 1050–1063 (EKQK…EALE), 1109–1122 (SPLE…EAPS), 1136–1160 (ESHE…EHVK), 1168–1183 (SCKE…RRVT), and 1191–1201 (LEDKKESREDE). Phosphoserine occurs at positions 1114, 1115, and 1122. Positions 1211–1222 (ENTSQKQPTEQP) are enriched in polar residues. A phosphoserine mark is found at Ser-1242, Ser-1253, Ser-1261, and Ser-1267. Thr-1271 bears the Phosphothreonine mark. Residues Ser-1290, Ser-1323, and Ser-1331 each carry the phosphoserine modification. The residue at position 1346 (Thr-1346) is a Phosphothreonine. Phosphoserine is present on residues Ser-1354, Ser-1356, and Ser-1405. The segment covering 1467-1478 (AAGEKRTKEPGG) has biased composition (basic and acidic residues). The Phorbol-ester/DAG-type zinc finger occupies 1632–1681 (GHVFASYQVSIPQSCEQCLSYIWLMDKALLCSVCKMTCHKKCVHKIQSHC). Residues 1703 to 1888 (DSLTSDKASV…MLIKEQMRKY (186 aa)) form the Rho-GAP domain. The interaction with RHOA stretch occupies residues 1739-1744 (AANRTR). A coiled-coil region spans residues 1880–1901 (LIKEQMRKYKVKMEEISQLEAA). A phosphoserine mark is found at Ser-1926, Ser-1972, Ser-1992, and Ser-1999. Residues 1959-1989 (EDREKEILIERIQSIKEEKEDITYRLPELDP) are a coiled coil. Basic and acidic residues predominate over residues 1980 to 1993 (ITYRLPELDPRGSD). A disordered region spans residues 1980–2157 (ITYRLPELDP…LPPASGQTNG (178 aa)). Thr-2005 carries the post-translational modification Phosphothreonine. The span at 2021–2037 (PPAPALPCPGAPTPSPL) shows a compositional bias: pro residues. Position 2050 is a phosphoserine (Ser-2050). Residues 2081–2093 (PRWAPGAREAAAP) are compositionally biased toward low complexity. Residues 2095–2106 (RRREPPARRPDQ) are compositionally biased toward basic and acidic residues. A Phosphoserine modification is found at Ser-2141.

It belongs to the TRAFAC class myosin-kinesin ATPase superfamily. Myosin family. As to quaternary structure, interacts (via IQ domains) with CALM. Interacts with RHOA. Interacts (via Rho-GAP domain) with ROBO1; this inhibits the interaction with RHOA and the stimulation of RHOA GTPase activity, and thereby increases the levels of active RHOA. As to expression, detected in peripheral blood leukocytes (at protein level). Expressed predominantly in peripheral blood leukocytes and at lower levels, in thymus, spleen, testis, prostate, ovary, brain, small intestine and lung.

The protein resides in the cytoplasm. It localises to the cell cortex. Its subcellular location is the perinuclear region. The protein localises to the cytoskeleton. Its function is as follows. Myosins are actin-based motor molecules with ATPase activity. Unconventional myosins serve in intracellular movements. Binds actin with high affinity both in the absence and presence of ATP and its mechanochemical activity is inhibited by calcium ions. Also acts as a GTPase activator for RHOA. Plays a role in the regulation of cell migration via its role as RHOA GTPase activator. This is regulated by its interaction with the SLIT2 receptor ROBO1; interaction with ROBO1 impairs interaction with RHOA and subsequent activation of RHOA GTPase activity, and thereby leads to increased levels of active, GTP-bound RHOA. This Homo sapiens (Human) protein is Unconventional myosin-IXb (MYO9B).